The chain runs to 1038 residues: Translation initiation factor IF-2 (1038 aa).

Disordered regions lie at residues 39-346 (TISE…KWQE) and 403-451 (KPKA…PEKV). Over residues 103-125 (RNTTSNAPEASVANNQIASSEAN) the composition is skewed to polar residues. Positions 157–176 (PQKPAAPEAEPEAQSQAPAK) are enriched in low complexity. Basic and acidic residues-rich tracts occupy residues 178-197 (AVEK…ERQP) and 226-243 (PILK…DQAK). The segment covering 407–423 (ARAATAATAAPISSPTT) has biased composition (low complexity). Residues 431–450 (NNRDQNRRQETEVKRERPEK) are compositionally biased toward basic and acidic residues. The 174-residue stretch at 532-705 (RRPPVVTIMG…LLVAEVGELS (174 aa)) folds into the tr-type G domain. The segment at 541–548 (GHVDHGKT) is G1. Residue 541-548 (GHVDHGKT) coordinates GTP. The G2 stretch occupies residues 566-570 (GITQH). Positions 591–594 (DTPG) are G3. GTP is bound by residues 591–595 (DTPGH) and 645–648 (NKID). Residues 645–648 (NKID) form a G4 region. The segment at 681–683 (SAI) is G5.

It belongs to the TRAFAC class translation factor GTPase superfamily. Classic translation factor GTPase family. IF-2 subfamily.

The protein resides in the cytoplasm. In terms of biological role, one of the essential components for the initiation of protein synthesis. Protects formylmethionyl-tRNA from spontaneous hydrolysis and promotes its binding to the 30S ribosomal subunits. Also involved in the hydrolysis of GTP during the formation of the 70S ribosomal complex. The sequence is that of Translation initiation factor IF-2 from Trichormus variabilis (strain ATCC 29413 / PCC 7937) (Anabaena variabilis).